The chain runs to 586 residues: Aspartate--tRNA(Asp/Asn) ligase (586 aa).

Residue glutamate 172 participates in L-aspartate binding. Positions 196 to 199 (QLYK) are aspartate. Arginine 218 serves as a coordination point for L-aspartate. ATP is bound by residues 218–220 (RDE) and glutamine 227. Histidine 446 is a binding site for L-aspartate. Residue glutamate 480 participates in ATP binding. An L-aspartate-binding site is contributed by arginine 487. Residue 532–535 (GIDR) coordinates ATP.

This sequence belongs to the class-II aminoacyl-tRNA synthetase family. Type 1 subfamily. In terms of assembly, homodimer.

It localises to the cytoplasm. It carries out the reaction tRNA(Asx) + L-aspartate + ATP = L-aspartyl-tRNA(Asx) + AMP + diphosphate. Aspartyl-tRNA synthetase with relaxed tRNA specificity since it is able to aspartylate not only its cognate tRNA(Asp) but also tRNA(Asn). Reaction proceeds in two steps: L-aspartate is first activated by ATP to form Asp-AMP and then transferred to the acceptor end of tRNA(Asp/Asn). The chain is Aspartate--tRNA(Asp/Asn) ligase from Borreliella burgdorferi (strain ATCC 35210 / DSM 4680 / CIP 102532 / B31) (Borrelia burgdorferi).